The sequence spans 343 residues: MHILLNTLYLMTPRTLVRLDHETVKIEVEGELKMQIPLHHLGSIVCFGDVTLTTPLIMRCAEDKRLIVFHDQHGRFKARVEGPVSGNVFLRHAQHEALSDSKKTTAIARNIVAGKIRNTRQVVLRGAREADNEDDRKALQETARELAHGLDALSRSPDLEQIRGIEGNAARHYFATLDRMVRVNREAFKITHRNRRPPLDRMNALLSYIYALLLNDCLSAAEGVGLDPQIGYLHVLRSGRPALALDLMEEFRAILADRLALTLVNRRQIDERDFVERPGGAVHINDNARKEIAIAYQKRKQEEVLHPVLNRKVPLGLVPHIQARLLARVLRGDAEEYLPFMYR.

3 residues coordinate Mn(2+): Glu-166, His-234, and Glu-249.

This sequence belongs to the CRISPR-associated endonuclease Cas1 family. In terms of assembly, homodimer, forms a heterotetramer with a Cas2 homodimer. It depends on Mg(2+) as a cofactor. Mn(2+) is required as a cofactor.

In terms of biological role, CRISPR (clustered regularly interspaced short palindromic repeat), is an adaptive immune system that provides protection against mobile genetic elements (viruses, transposable elements and conjugative plasmids). CRISPR clusters contain spacers, sequences complementary to antecedent mobile elements, and target invading nucleic acids. CRISPR clusters are transcribed and processed into CRISPR RNA (crRNA). Acts as a dsDNA endonuclease. Involved in the integration of spacer DNA into the CRISPR cassette. This Moorella thermoacetica (strain ATCC 39073 / JCM 9320) protein is CRISPR-associated endonuclease Cas1 1.